Consider the following 393-residue polypeptide: Arrestin-C (393 aa).

Basic and acidic residues predominate over residues 371-386; the sequence is FARQEDGGEEKQKALA. The disordered stretch occupies residues 371-393; it reads FARQEDGGEEKQKALAEEGDEGS.

It belongs to the arrestin family. Homodimer; disulfide-linked in response to retinal illumination. Interacts with CXCR4; the interaction is dependent on the C-terminal phosphorylation of CXCR4 and modulates the calcium ion mobilization activity of CXCR4.

Its subcellular location is the photoreceptor inner segment. The protein resides in the cell projection. It is found in the cilium. It localises to the photoreceptor outer segment. Functionally, may play a role in an as yet undefined retina-specific signal transduction. Could bind to photoactivated-phosphorylated red/green opsins. The sequence is that of Arrestin-C (ARR3) from Ictidomys tridecemlineatus (Thirteen-lined ground squirrel).